The chain runs to 267 residues: Extensin (267 aa).

Positions 1–267 (MCPAFSIFFN…HTPSPPPPYY (267 aa)) are disordered. Repeats lie at residues 18–33 (PPTYTPSPKPPTPKPT), 34–54 (PPTYTPSPKPPASKPPTPKPT), 55–70 (PPTYTPSPKPPTPKPT), 71–91 (PPTYTPSPKPPATKPPTPKPT), 92–107 (PPTYTPSPKPPTPKPT), 108–128 (PPTYTPSPKPPATKPPTPKPT), 129–144 (PPTYTPSPKPPTPKPT), 145–160 (PPTYTPSPKPPTPKPT), 161–179 (PPTYTPSPKPPTHPTPKPT), 180–195 (PPTYTPSPKPPTPKPT), 196–211 (PPTYTPSPKPPTPKPT), 212–232 (PPTYTPSPKPPATKPPTPKPT), and 233–253 (PPTYTPTPKPPATKPPTYTPT). The segment at 18–253 (PPTYTPSPKP…ATKPPTYTPT (236 aa)) is highly repetitive. Positions 20-267 (TYTPSPKPPT…HTPSPPPPYY (248 aa)) are enriched in pro residues. The segment at 261 to 265 (SPPPP) is extensin repetitive element.

Hydroxylated on proline residues in the S-P-P-P-P repeat. In terms of processing, O-glycosylated on hydroxyprolines. In terms of tissue distribution, mainly in the coleoptile node and root tip.

The protein resides in the secreted. It localises to the primary cell wall. Its function is as follows. Structural component in primary cell wall. This Zea mays (Maize) protein is Extensin (HRGP).